A 66-amino-acid chain; its full sequence is Large ribosomal subunit protein bL35 (66 aa).

It belongs to the bacterial ribosomal protein bL35 family.

The sequence is that of Large ribosomal subunit protein bL35 from Hyphomonas neptunium (strain ATCC 15444).